The chain runs to 153 residues: Ribosome maturation factor RimP (153 aa).

The protein belongs to the RimP family.

The protein localises to the cytoplasm. In terms of biological role, required for maturation of 30S ribosomal subunits. This Coxiella burnetii (strain CbuK_Q154) (Coxiella burnetii (strain Q154)) protein is Ribosome maturation factor RimP.